A 370-amino-acid polypeptide reads, in one-letter code: Prolactin-releasing peptide receptor (370 aa).

The segment at methionine 1–glutamate 34 is disordered. At methionine 1–leucine 62 the chain is on the extracellular side. Positions alanine 21 to glutamate 34 are enriched in polar residues. N-linked (GlcNAc...) asparagine glycans are attached at residues asparagine 27 and asparagine 36. The chain crosses the membrane as a helical span at residues isoleucine 63–leucine 83. At valine 84–asparagine 101 the chain is on the cytoplasmic side. The helical transmembrane segment at leucine 102 to phenylalanine 122 threads the bilayer. At glutamate 123–glycine 126 the chain is on the extracellular side. The helical transmembrane segment at tryptophan 127 to valine 147 threads the bilayer. Residues cysteine 134 and cysteine 211 are joined by a disulfide bond. Residues serine 148–leucine 175 lie on the Cytoplasmic side of the membrane. The helical transmembrane segment at serine 176 to valine 196 threads the bilayer. Residues histidine 197–glutamine 223 lie on the Extracellular side of the membrane. A helical transmembrane segment spans residues isoleucine 224–serine 244. Residues tyrosine 245–threonine 276 are Cytoplasmic-facing. The helical transmembrane segment at phenylalanine 277–phenylalanine 297 threads the bilayer. Residues asparagine 298–glutamine 317 are Extracellular-facing. A helical transmembrane segment spans residues leucine 318–leucine 338. At histidine 339–isoleucine 370 the chain is on the cytoplasmic side. A required for interaction with GRIP1, GRIP2 and PICK1 region spans residues threonine 365 to isoleucine 370.

It belongs to the G-protein coupled receptor 1 family. Interacts through its C-terminal region with the PDZ domain-containing proteins GRIP1, GRIP2 and PICK1. Interacts with PDZ domains 4 and 5 of GRIP1 and with the PDZ domain of PICK1. As to expression, widely expressed, with highest levels in pituitary, cerebellum, and hypothalamus.

It is found in the cell membrane. Its function is as follows. Receptor for prolactin-releasing peptide (PrRP). Implicated in lactation, regulation of food intake and pain-signal processing. This chain is Prolactin-releasing peptide receptor (Prlhr), found in Rattus norvegicus (Rat).